The sequence spans 1492 residues: Condensin-2 complex subunit D3-L (1492 aa).

The interval 152–201 (WPRDPNASRKRKKDTLKSSQGDNRGGRKRPRPPRRDEQEMEDLSEEEQDE) is disordered. The span at 189-201 (QEMEDLSEEEQDE) shows a compositional bias: acidic residues. HEAT repeat units lie at residues 543-581 (SSDG…CHLI), 583-619 (CSSE…AQPH), and 621-659 (VLIQ…QSIT). Disordered stretches follow at residues 1269–1345 (QLER…PRPR), 1359–1406 (RKAA…SLVG), and 1454–1492 (IMSP…KPSN). Polar residues predominate over residues 1277 to 1290 (NVQNPPSAESTGSP). Low complexity predominate over residues 1377–1388 (PSTPSPARTTSS).

In terms of assembly, component of the condensin-2 complex, which contains the smc2 and smc4 heterodimer, and three non SMC subunits, ncapg2, ncaph2 and ncapd3 that probably regulate the complex.

It is found in the nucleus. Its function is as follows. Regulatory subunit of the condensin-2 complex, a complex which establishes mitotic chromosome architecture and is involved in physical rigidity of the chromatid axis. In Xenopus laevis (African clawed frog), this protein is Condensin-2 complex subunit D3-L.